Reading from the N-terminus, the 29-residue chain is LFGGLLDKLREKIKKYCNKENLDKACSKL.

Belongs to the myrmexin family. Heterodimer composed of subunit SS2 and subunit LS1 (U1-PSDTX-Pt1e), and heterodimer composed of subunit SS2 and LS2 (U1-PSDTX-Pt1c); disulfide-linked. In terms of tissue distribution, expressed by the venom gland.

The protein resides in the secreted. In terms of biological role, this heterodimer may have anti-inflammatory properties, since the myrmexin complex (composed of 6 SS-LS heterodimers) inhibits carrageenin-induced edema in a dose-dependent manner (after subcutaneous injection into rats). This Pseudomyrmex triplarinus (Ant) protein is U1-pseudomyrmecitoxin-Pt1 subunit SS2.